We begin with the raw amino-acid sequence, 374 residues long: AA14 family lytic polysaccharide monooxygenase B (374 aa).

A signal peptide spans 1 to 18 (MIPVFLAAIAVFLPLTSG). N-linked (GlcNAc...) asparagine glycosylation is found at N31, N49, N94, and N151. Intrachain disulfides connect C85–C108, C127–C154, C171–C176, C178–C200, and C220–C236. N-linked (GlcNAc...) asparagine glycans are attached at residues N235 and N315. The tract at residues 306-374 (ISNATPAPSN…TQSRKMRYVF (69 aa)) is disordered. The span at 313-344 (PSNGSCSSRPPSSPVSSSAASTTTSRSPRPSA) shows a compositional bias: low complexity.

It belongs to the polysaccharide monooxygenase AA14 family. Requires Cu(2+) as cofactor.

Its subcellular location is the secreted. In terms of biological role, lytic polysaccharide monooxygenase (LPMO) that oxidatively cleaves xylan with both C1 and C4 regioselectivity and that specifically targets the protective shield made by heteroxylans that cover cellulose microfibrils in wood. Catalysis by LPMOs requires the reduction of the active-site copper from Cu(II) to Cu(I) by a reducing agent and H(2)O(2) or O(2) as a cosubstrate. Cleavage occurs only when xylans are bound to cellulose and not when they are in solution. Increases the efficiency of wood saccharification through oxidative cleavage of highly refractory xylan-coated cellulose fibers via synergistic relationship with xylan-active enzymes, xylobiohydrolases and cellobiohydrolases. The sequence is that of AA14 family lytic polysaccharide monooxygenase B from Pycnoporus cinnabarinus (Cinnabar-red polypore).